A 155-amino-acid chain; its full sequence is RNA pyrophosphohydrolase (155 aa).

The Nudix hydrolase domain maps to 5 to 147 (KYRPNVAAII…KRQVYRQVIA (143 aa)). Positions 42 to 63 (GGIDEGETPLEALYRELLEEIG) match the Nudix box motif.

This sequence belongs to the Nudix hydrolase family. RppH subfamily. A divalent metal cation is required as a cofactor.

In terms of biological role, accelerates the degradation of transcripts by removing pyrophosphate from the 5'-end of triphosphorylated RNA, leading to a more labile monophosphorylated state that can stimulate subsequent ribonuclease cleavage. The protein is RNA pyrophosphohydrolase of Helicobacter pylori (strain P12).